The following is a 62-amino-acid chain: Bacteriocin pediocin PA-1 (62 aa).

Positions 1–18 (MKKIEKLTEKEMANIIGG) are excised as a propeptide. 2 cysteine pairs are disulfide-bonded: cysteine 27–cysteine 32 and cysteine 42–cysteine 62. A hydrophobic region spans residues 40-52 (TTCIINNGAMAWA).

The protein belongs to the bacteriocin class IIA/YGNGV family.

It is found in the secreted. Functionally, bactericidal activity (effective inhibitor of L.monocytogenes). This chain is Bacteriocin pediocin PA-1 (pedA), found in Pediococcus acidilactici.